The following is a 462-amino-acid chain: Argininosuccinate lyase (462 aa).

It belongs to the lyase 1 family. Argininosuccinate lyase subfamily.

The protein resides in the cytoplasm. It carries out the reaction 2-(N(omega)-L-arginino)succinate = fumarate + L-arginine. It functions in the pathway amino-acid biosynthesis; L-arginine biosynthesis; L-arginine from L-ornithine and carbamoyl phosphate: step 3/3. The chain is Argininosuccinate lyase from Pelagibacter ubique (strain HTCC1062).